Here is a 195-residue protein sequence, read N- to C-terminus: Imidazoleglycerol-phosphate dehydratase (195 aa).

This sequence belongs to the imidazoleglycerol-phosphate dehydratase family.

It localises to the cytoplasm. The catalysed reaction is D-erythro-1-(imidazol-4-yl)glycerol 3-phosphate = 3-(imidazol-4-yl)-2-oxopropyl phosphate + H2O. The protein operates within amino-acid biosynthesis; L-histidine biosynthesis; L-histidine from 5-phospho-alpha-D-ribose 1-diphosphate: step 6/9. The protein is Imidazoleglycerol-phosphate dehydratase of Citrifermentans bemidjiense (strain ATCC BAA-1014 / DSM 16622 / JCM 12645 / Bem) (Geobacter bemidjiensis).